The sequence spans 477 residues: Lactate utilization protein B (477 aa).

4Fe-4S ferredoxin-type domains follow at residues 304-334 (GTEFQSVLQCIRCAACINVCPVYRHVGGHSY) and 353-382 (YDDYKELPYASSLCAACSEACPVKIPLHEL). Cys-313, Cys-316, Cys-319, Cys-323, Cys-366, Cys-369, and Cys-373 together coordinate [4Fe-4S] cluster. A disordered region spans residues 433 to 477 (KEDGKITKGPGPLKQWTQIRDFPAPNKSRFRDWFEDRRKEKGEDK). Basic and acidic residues predominate over residues 461 to 477 (RFRDWFEDRRKEKGEDK).

It belongs to the LutB/YkgF family.

Is involved in L-lactate degradation and allows cells to grow with lactate as the sole carbon source. Has probably a role as an electron transporter during oxidation of L-lactate. This chain is Lactate utilization protein B, found in Bacillus licheniformis (strain ATCC 14580 / DSM 13 / JCM 2505 / CCUG 7422 / NBRC 12200 / NCIMB 9375 / NCTC 10341 / NRRL NRS-1264 / Gibson 46).